Consider the following 123-residue polypeptide: Large ribosomal subunit protein uL22c (123 aa).

The protein belongs to the universal ribosomal protein uL22 family. As to quaternary structure, part of the 50S ribosomal subunit.

The protein resides in the plastid. The protein localises to the chloroplast. Its function is as follows. This protein binds specifically to 23S rRNA. In terms of biological role, the globular domain of the protein is located near the polypeptide exit tunnel on the outside of the subunit, while an extended beta-hairpin is found that lines the wall of the exit tunnel in the center of the 70S ribosome. In Chara vulgaris (Common stonewort), this protein is Large ribosomal subunit protein uL22c (rpl22).